The following is a 428-amino-acid chain: Immunoglobulin superfamily member 11 (428 aa).

The signal sequence occupies residues 1-22; it reads MTRRRSALASWLLLSLLGVAAS. Positions 23-136 constitute an Ig-like V-type domain; it reads LEVSESPGSV…DRGGRNIGVT (114 aa). At 23–239 the chain is on the extracellular side; it reads LEVSESPGSV…LQVISPQPRS (217 aa). Disulfide bonds link Cys44/Cys120 and Cys165/Cys215. N-linked (GlcNAc...) asparagine glycosylation is present at Asn102. An Ig-like C2-type domain is found at 144–234; that stretch reads PSAPNCQIQG…TCLLDLQVIS (91 aa). Residues 240–260 traverse the membrane as a helical segment; that stretch reads VGVIAGAVGTGAVLIVICLAL. Topologically, residues 261–428 are cytoplasmic; that stretch reads TSGAFFYWRS…PAQSRAGSLV (168 aa). Arg375 bears the Omega-N-methylarginine mark.

N-glycosylated.

The protein localises to the cell membrane. In terms of biological role, functions as a cell adhesion molecule through homophilic interaction. Stimulates cell growth. The chain is Immunoglobulin superfamily member 11 (Igsf11) from Rattus norvegicus (Rat).